A 75-amino-acid chain; its full sequence is Caerin-1.1 (75 aa).

The N-terminal stretch at 1–22 is a signal peptide; the sequence is MASLKKSLFLVLLLGFVSVSIC. Residues 23–49 constitute a propeptide that is removed on maturation; it reads EEEKRQEDEDEHEEEGESQEEGSEEKR. The interval 24 to 49 is disordered; it reads EEKRQEDEDEHEEEGESQEEGSEEKR. Residues 30-45 are compositionally biased toward acidic residues; sequence DEDEHEEEGESQEEGS. Leu74 carries the post-translational modification Leucine amide.

The protein belongs to the frog skin active peptide (FSAP) family. Caerin subfamily. In terms of processing, the major product is Caerin-1.1; in addition, different peptides are produced that are missing some amino acid residues at the N-terminus or C-terminus. Caerin-1.1.1 and Caerin-1.1.4 are inactive. Expressed by the skin parotoid and/or rostral glands.

The protein resides in the secreted. In terms of biological role, antimicrobial peptide with antibacterial and antiviral activities. Adopts an alpha helical conformation which can disrupt bacterial membranes. Inhibits the formation of NO by neuronal nitric oxide synthase (nNOS) at micromolar concentrations. Acts by a non-competitive mechanism, probably by binding to calcium/calmodulin and as a consequence blocking calmodulin attachment to nNOS. Is inactive. This Ranoidea caerulea (Green tree frog) protein is Caerin-1.1.